The following is an 885-amino-acid chain: DNA mismatch repair protein MutS (885 aa).

626–633 serves as a coordination point for ATP; that stretch reads GPNMGGKS.

This sequence belongs to the DNA mismatch repair MutS family.

This protein is involved in the repair of mismatches in DNA. It is possible that it carries out the mismatch recognition step. This protein has a weak ATPase activity. This Burkholderia lata (strain ATCC 17760 / DSM 23089 / LMG 22485 / NCIMB 9086 / R18194 / 383) protein is DNA mismatch repair protein MutS.